Consider the following 173-residue polypeptide: Bifunctional protein PyrR (173 aa).

Substrate is bound by residues 40-41 (TR), 97-105 (DDVLYTGRT), and Arg130. The PRPP-binding signature appears at 93 to 105 (VILIDDVLYTGRT).

Belongs to the purine/pyrimidine phosphoribosyltransferase family. PyrR subfamily. Homodimer and homohexamer; in equilibrium.

It carries out the reaction UMP + diphosphate = 5-phospho-alpha-D-ribose 1-diphosphate + uracil. Regulates transcriptional attenuation of the pyrimidine nucleotide (pyr) operon by binding in a uridine-dependent manner to specific sites on pyr mRNA. This disrupts an antiterminator hairpin in the RNA and favors formation of a downstream transcription terminator, leading to a reduced expression of downstream genes. Functionally, also displays a weak uracil phosphoribosyltransferase activity which is not physiologically significant. The sequence is that of Bifunctional protein PyrR from Streptococcus pyogenes serotype M6 (strain ATCC BAA-946 / MGAS10394).